The chain runs to 308 residues: Quinolinate synthase (308 aa).

2 residues coordinate iminosuccinate: His21 and Ser38. Residue Cys83 coordinates [4Fe-4S] cluster. Iminosuccinate-binding positions include 109-111 and Ser126; that span reads YIN. [4Fe-4S] cluster is bound at residue Cys170. Iminosuccinate is bound by residues 196–198 and Thr213; that span reads HPE. [4Fe-4S] cluster is bound at residue Cys263.

This sequence belongs to the quinolinate synthase family. Type 2 subfamily. [4Fe-4S] cluster is required as a cofactor.

The protein localises to the cytoplasm. It catalyses the reaction iminosuccinate + dihydroxyacetone phosphate = quinolinate + phosphate + 2 H2O + H(+). The protein operates within cofactor biosynthesis; NAD(+) biosynthesis; quinolinate from iminoaspartate: step 1/1. Its function is as follows. Catalyzes the condensation of iminoaspartate with dihydroxyacetone phosphate to form quinolinate. This chain is Quinolinate synthase, found in Sulfurisphaera tokodaii (strain DSM 16993 / JCM 10545 / NBRC 100140 / 7) (Sulfolobus tokodaii).